Here is a 649-residue protein sequence, read N- to C-terminus: Acetyl-coenzyme A synthetase (649 aa).

Residues 191 to 194 (RGGR), Thr-309, and Asn-333 each bind CoA. ATP contacts are provided by residues 385 to 387 (GEP), 409 to 414 (DTWWQT), Asp-498, and Arg-513. Ser-521 contacts CoA. Arg-524 lines the ATP pocket. Mg(2+) contacts are provided by Val-535, His-537, and Val-540. Arg-582 serves as a coordination point for CoA. Lys-607 bears the N6-acetyllysine mark.

This sequence belongs to the ATP-dependent AMP-binding enzyme family. Mg(2+) serves as cofactor. In terms of processing, acetylated. Deacetylation by the SIR2-homolog deacetylase activates the enzyme.

It catalyses the reaction acetate + ATP + CoA = acetyl-CoA + AMP + diphosphate. In terms of biological role, catalyzes the conversion of acetate into acetyl-CoA (AcCoA), an essential intermediate at the junction of anabolic and catabolic pathways. AcsA undergoes a two-step reaction. In the first half reaction, AcsA combines acetate with ATP to form acetyl-adenylate (AcAMP) intermediate. In the second half reaction, it can then transfer the acetyl group from AcAMP to the sulfhydryl group of CoA, forming the product AcCoA. This Novosphingobium aromaticivorans (strain ATCC 700278 / DSM 12444 / CCUG 56034 / CIP 105152 / NBRC 16084 / F199) protein is Acetyl-coenzyme A synthetase.